The following is a 141-amino-acid chain: Nucleoside diphosphate kinase (141 aa).

Residues lysine 11, phenylalanine 59, arginine 87, threonine 93, arginine 104, and asparagine 114 each contribute to the ATP site. Histidine 117 functions as the Pros-phosphohistidine intermediate in the catalytic mechanism.

Belongs to the NDK family. Homotetramer. It depends on Mg(2+) as a cofactor.

It is found in the cytoplasm. The catalysed reaction is a 2'-deoxyribonucleoside 5'-diphosphate + ATP = a 2'-deoxyribonucleoside 5'-triphosphate + ADP. The enzyme catalyses a ribonucleoside 5'-diphosphate + ATP = a ribonucleoside 5'-triphosphate + ADP. In terms of biological role, major role in the synthesis of nucleoside triphosphates other than ATP. The ATP gamma phosphate is transferred to the NDP beta phosphate via a ping-pong mechanism, using a phosphorylated active-site intermediate. In Nitrosospira multiformis (strain ATCC 25196 / NCIMB 11849 / C 71), this protein is Nucleoside diphosphate kinase.